We begin with the raw amino-acid sequence, 27 residues long: Weak neurotoxin E3 (27 aa).

As to expression, expressed by the venom gland.

The protein localises to the secreted. Binds to muscle nicotinic acetylcholine receptor (nAChR) and inhibit acetylcholine from binding to the receptor, thereby impairing neuromuscular transmission. The protein is Weak neurotoxin E3 of Micrurus pyrrhocryptus (Coral snake).